The primary structure comprises 1176 residues: Carbamoyl phosphate synthase arginine-specific large chain (1176 aa).

Residues Met-1–Ala-11 constitute a mitochondrion transit peptide. The segment at Ser-70–Asp-465 is carboxyphosphate synthetic domain. Residues Arg-197, Arg-237, Gly-243, Gly-244, Lys-273, Leu-275, Glu-280, Gly-306, Thr-307, His-308, Gln-348, and Glu-362 each contribute to the ATP site. Positions Val-201–Leu-391 constitute an ATP-grasp 1 domain. Residues Gln-348, Glu-362, and Asn-364 each coordinate Mg(2+). Positions 348, 362, and 364 each coordinate Mn(2+). Residues Pro-466 to Asp-610 are oligomerization domain. The interval Val-611–Asn-997 is carbamoyl phosphate synthetic domain. The ATP-grasp 2 domain occupies Ser-734–Met-931. 10 residues coordinate ATP: Arg-770, Gln-809, Ile-811, Glu-816, Gly-841, Val-842, His-843, Ser-844, Gln-884, and Glu-902. Residues Gln-884, Glu-902, and Asn-904 each contribute to the Mg(2+) site. 3 residues coordinate Mn(2+): Gln-884, Glu-902, and Asn-904. The allosteric domain stretch occupies residues Gly-998–Lys-1137. Residues Met-999–Thr-1154 form the MGS-like domain.

Belongs to the CarB family. In terms of assembly, heterodimer composed of 2 chains; the small (or glutamine) chain promotes the hydrolysis of glutamine to ammonia, which is used by the large (or ammonia) chain to synthesize carbamoyl phosphate. Mg(2+) serves as cofactor. Requires Mn(2+) as cofactor.

It localises to the mitochondrion. The catalysed reaction is hydrogencarbonate + L-glutamine + 2 ATP + H2O = carbamoyl phosphate + L-glutamate + 2 ADP + phosphate + 2 H(+). It catalyses the reaction hydrogencarbonate + NH4(+) + 2 ATP = carbamoyl phosphate + 2 ADP + phosphate + 2 H(+). Its pathway is amino-acid biosynthesis; L-arginine biosynthesis; carbamoyl phosphate from bicarbonate: step 1/1. Large subunit of the arginine-specific carbamoyl phosphate synthase (CPSase). CPSase catalyzes the formation of carbamoyl phosphate from the ammonia moiety of glutamine, hydrogencarbonate, and phosphate donated by ATP, constituting the first step of 2 biosynthetic pathways, one leading to arginine and/or urea and the other to pyrimidine nucleotides. The large subunit (synthetase) binds the substrates ammonia (free or transferred from glutamine from the small subunit), hydrogencarbonate and ATP and carries out an ATP-coupled ligase reaction, activating hydrogencarbonate by forming carboxy phosphate which reacts with ammonia to form carbamoyl phosphate. This is Carbamoyl phosphate synthase arginine-specific large chain (argA) from Cutaneotrichosporon cutaneum (Yeast).